Consider the following 442-residue polypeptide: Zinc finger protein sfp1 (442 aa).

Low complexity predominate over residues 193–208 (AASSDMSSDEASSQAE). Disordered regions lie at residues 193 to 219 (AASSDMSSDEASSQAETTGTPKKMPES) and 304 to 333 (SPFVRKSSSDLEAKPSKKQRSTPAFSHDSP). 2 consecutive C2H2-type zinc fingers follow at residues 350 to 375 (YKCPVPNCDKAYKNQNGLKYHKLHGH) and 399 to 422 (YRCEVCSKRYKNLNGLKYHRTHSH).

The protein localises to the cytoplasm. Its subcellular location is the nucleus. The protein is Zinc finger protein sfp1 (sfp1) of Schizosaccharomyces pombe (strain 972 / ATCC 24843) (Fission yeast).